Here is a 210-residue protein sequence, read N- to C-terminus: Imidazoleglycerol-phosphate dehydratase (210 aa).

The protein belongs to the imidazoleglycerol-phosphate dehydratase family.

Its subcellular location is the cytoplasm. The catalysed reaction is D-erythro-1-(imidazol-4-yl)glycerol 3-phosphate = 3-(imidazol-4-yl)-2-oxopropyl phosphate + H2O. It functions in the pathway amino-acid biosynthesis; L-histidine biosynthesis; L-histidine from 5-phospho-alpha-D-ribose 1-diphosphate: step 6/9. The polypeptide is Imidazoleglycerol-phosphate dehydratase (Mycobacterium marinum (strain ATCC BAA-535 / M)).